Consider the following 470-residue polypeptide: Carboxypeptidase Q (470 aa).

Positions 1-18 (MRSLFFLFIVHLLALGSG) are cleaved as a signal peptide. A propeptide spanning residues 19–42 (KAVFKNGVSQRTFREIKEEIANYE) is cleaved from the precursor. An N-linked (GlcNAc...) asparagine glycan is attached at asparagine 59. Zn(2+) is bound by residues histidine 288 and aspartate 300. Glutamate 334 acts as the Nucleophile in catalysis. Glutamate 335 provides a ligand contact to Zn(2+). Asparagine 351 is a glycosylation site (N-linked (GlcNAc...) asparagine). Aspartate 362 is a binding site for Zn(2+). N-linked (GlcNAc...) asparagine glycosylation occurs at asparagine 394. A Zn(2+)-binding site is contributed by histidine 432.

It belongs to the peptidase M28 family. As to quaternary structure, homodimer. The monomeric form is inactive while the homodimer is active. In terms of processing, N-glycosylated. The secreted form is modified by hybrid or complex type oligosaccharide chains.

It is found in the endoplasmic reticulum. The protein resides in the golgi apparatus. The protein localises to the lysosome. Its subcellular location is the secreted. In terms of biological role, carboxypeptidase that may play an important role in the hydrolysis of circulating peptides. Catalyzes the hydrolysis of dipeptides with unsubstituted terminals into amino acids. May play a role in the liberation of thyroxine hormone from its thyroglobulin (Tg) precursor. The protein is Carboxypeptidase Q (Cpq) of Mus musculus (Mouse).